A 346-amino-acid polypeptide reads, in one-letter code: N-acetyl-gamma-glutamyl-phosphate reductase (346 aa).

Cys-149 is an active-site residue.

Belongs to the NAGSA dehydrogenase family. Type 1 subfamily.

Its subcellular location is the cytoplasm. It carries out the reaction N-acetyl-L-glutamate 5-semialdehyde + phosphate + NADP(+) = N-acetyl-L-glutamyl 5-phosphate + NADPH + H(+). It functions in the pathway amino-acid biosynthesis; L-arginine biosynthesis; N(2)-acetyl-L-ornithine from L-glutamate: step 3/4. In terms of biological role, catalyzes the NADPH-dependent reduction of N-acetyl-5-glutamyl phosphate to yield N-acetyl-L-glutamate 5-semialdehyde. This Desulfotalea psychrophila (strain LSv54 / DSM 12343) protein is N-acetyl-gamma-glutamyl-phosphate reductase.